The primary structure comprises 215 residues: Glycerol-3-phosphate acyltransferase (215 aa).

Helical transmembrane passes span 14–34 (SSSA…AVVV), 63–83 (TAAA…LWLA), 92–112 (WGAY…PLFL), 128–148 (MAIE…VAVF), and 154–174 (LAAL…SGAA).

This sequence belongs to the PlsY family. As to quaternary structure, probably interacts with PlsX.

Its subcellular location is the cell inner membrane. It carries out the reaction an acyl phosphate + sn-glycerol 3-phosphate = a 1-acyl-sn-glycero-3-phosphate + phosphate. It functions in the pathway lipid metabolism; phospholipid metabolism. In terms of biological role, catalyzes the transfer of an acyl group from acyl-phosphate (acyl-PO(4)) to glycerol-3-phosphate (G3P) to form lysophosphatidic acid (LPA). This enzyme utilizes acyl-phosphate as fatty acyl donor, but not acyl-CoA or acyl-ACP. The sequence is that of Glycerol-3-phosphate acyltransferase from Bordetella bronchiseptica (strain ATCC BAA-588 / NCTC 13252 / RB50) (Alcaligenes bronchisepticus).